The chain runs to 241 residues: MSMLFYTLITALLIGIQAAPHTESNVPAGHAIPQAHWIKLQHSLDTVLRRAHSAPAGPIAARVAGQTHNITVDPKLFKKRRLRSPRVLFSTQPPPVAADTQDLDFEAGGASSFNRTHRSKRSSSHPVFHRGEFSVCDSISVWVGDKTTATDIKGKEVMVLGEVNINNSVFKQYFFETKCRDPNPVDSGCRGIDAKHWNSYCTTTHTFVKALTMDGKQAAWRFIRIDTACVCVLSRKTGQRA.

An N-terminal signal peptide occupies residues 1–18 (MSMLFYTLITALLIGIQA). Residues 19 to 121 (APHTESNVPA…SFNRTHRSKR (103 aa)) constitute a propeptide that is removed on maturation. 3 disulfides stabilise this stretch: Cys136-Cys201, Cys179-Cys229, and Cys189-Cys231. An N-linked (GlcNAc...) asparagine glycan is attached at Asn166. Positions 173 and 209 each coordinate a 1-acyl-sn-glycero-3-phospho-(1D-myo-inositol). Position 209 (Lys209) interacts with a 1-acyl-sn-glycero-3-phospho-L-serine.

The protein belongs to the NGF-beta family. As to quaternary structure, homodimer. The homodimer interacts with a single NTRK1 chain. The homodimer interacts with a single NGFR chain. The NGF dimer interacts with a single SORCS2 chain (via extracellular domain). The NGF precursor (proNGF) binds to a receptor complex formed by SORT1 and NGFR, which leads to NGF endocytosis. Both mature NGF and the immature NGF precursor (proNGF) interact with SORCS2 and with the heterodimer formed by SORCS2 and NGFR (via extracellular domains). The NGF precursor (proNGF) has much higher affinity for SORCS2 than mature NGF. The NGF precursor (proNGF) has much higher affinity for SORT1 than mature NGF. Interacts with ADAM10 in a divalent cation-dependent manner. Interacts with SORCS3.

It localises to the secreted. The protein resides in the endosome lumen. Its function is as follows. Nerve growth factor is important for the development and maintenance of the sympathetic and sensory nervous systems. Extracellular ligand for the NTRK1 and NGFR receptors, activates cellular signaling cascades to regulate neuronal proliferation, differentiation and survival. The immature NGF precursor (proNGF) functions as a ligand for the heterodimeric receptor formed by SORCS2 and NGFR, and activates cellular signaling cascades that lead to inactivation of RAC1 and/or RAC2, reorganization of the actin cytoskeleton and neuronal growth cone collapse. In contrast to mature NGF, the precursor form (proNGF) promotes neuronal apoptosis (in vitro). Inhibits metalloproteinase-dependent proteolysis of platelet glycoprotein VI. Binds lysophosphatidylinositol and lysophosphatidylserine between the two chains of the homodimer. The lipid-bound form promotes histamine relase from mast cells, contrary to the lipid-free form. This Bos taurus (Bovine) protein is Beta-nerve growth factor (NGF).